The following is a 300-amino-acid chain: Haloalkane dehalogenase (300 aa).

Positions 32 to 155 (AIVFQHGNPT…PAVRGVFQGF (124 aa)) constitute an AB hydrolase-1 domain. Asp109 (nucleophile) is an active-site residue. Catalysis depends on Glu133, which acts as the Proton donor. Residue His273 is the Proton acceptor of the active site.

This sequence belongs to the haloalkane dehalogenase family. Type 2 subfamily. In terms of assembly, monomer.

It catalyses the reaction 1-haloalkane + H2O = a halide anion + a primary alcohol + H(+). Its function is as follows. Catalyzes hydrolytic cleavage of carbon-halogen bonds in halogenated aliphatic compounds, leading to the formation of the corresponding primary alcohols, halide ions and protons. The protein is Haloalkane dehalogenase of Mycobacterium bovis (strain ATCC BAA-935 / AF2122/97).